Here is a 211-residue protein sequence, read N- to C-terminus: Urease accessory protein UreG (211 aa).

Gly16–Thr23 contacts GTP.

It belongs to the SIMIBI class G3E GTPase family. UreG subfamily. Homodimer. UreD, UreF and UreG form a complex that acts as a GTP-hydrolysis-dependent molecular chaperone, activating the urease apoprotein by helping to assemble the nickel containing metallocenter of UreC. The UreE protein probably delivers the nickel.

It is found in the cytoplasm. In terms of biological role, facilitates the functional incorporation of the urease nickel metallocenter. This process requires GTP hydrolysis, probably effectuated by UreG. The chain is Urease accessory protein UreG from Janthinobacterium sp. (strain Marseille) (Minibacterium massiliensis).